Here is a 442-residue protein sequence, read N- to C-terminus: Trigger factor (442 aa).

Positions 165-250 (DDRVIIDFEG…LQKVMAPELP (86 aa)) constitute a PPIase FKBP-type domain.

This sequence belongs to the FKBP-type PPIase family. Tig subfamily.

It localises to the cytoplasm. It carries out the reaction [protein]-peptidylproline (omega=180) = [protein]-peptidylproline (omega=0). Functionally, involved in protein export. Acts as a chaperone by maintaining the newly synthesized protein in an open conformation. Functions as a peptidyl-prolyl cis-trans isomerase. The protein is Trigger factor of Coxiella burnetii (strain RSA 493 / Nine Mile phase I).